The sequence spans 393 residues: Prokineticin receptor 1 (393 aa).

Residues 1-63 (MEITMGVMDE…NSRTFFAAKI (63 aa)) are Extracellular-facing. N-linked (GlcNAc...) asparagine glycans are attached at residues N11, N14, and N36. Residues 64-84 (VIGMALVGIMLVCGIGNFIFI) form a helical membrane-spanning segment. At 85 to 98 (AALARYKKLRNLTN) the chain is on the cytoplasmic side. The chain crosses the membrane as a helical span at residues 99-119 (LLIANLAISDFLVAIVCCPFE). Topologically, residues 120-145 (MDYYVVRQLSWEHGHVLCASVNYLRT) are extracellular. A disulfide bridge links C137 with C217. The chain crosses the membrane as a helical span at residues 146–166 (VSLYVSTNALLAIAIDRYLAI). Residues 167–179 (VHPLRPRMKYQTA) are Cytoplasmic-facing. The helical transmembrane segment at 180–200 (TGLIALVWVVSILVAIPSAYF) threads the bilayer. At 201–232 (TTETVLVIVKSQEKIFCGQIWPVDQQIYYKSY) the chain is on the extracellular side. A helical transmembrane segment spans residues 233–253 (FLFIFGIEFVGPVVTMTLCYA). Residues 254-282 (RISRELWFKAVPGFQTEQIRKRLRCRRKT) are Cytoplasmic-facing. The helical transmembrane segment at 283–303 (VLVLMCILTAYVLCWAPFYGF) threads the bilayer. The Extracellular portion of the chain corresponds to 304–322 (AIVRDFFPTVFVKEKHYLT). The chain crosses the membrane as a helical span at residues 323–343 (AFYVVECIAMSNSMINTVCFV). Topologically, residues 344–393 (TVKNNTIKYFKKIMLLHWKASYNGSKSSGDLDLKTTGVPATEEVDCIGLK) are cytoplasmic.

This sequence belongs to the G-protein coupled receptor 1 family.

The protein resides in the cell membrane. Receptor for prokineticin 1. Exclusively coupled to the G(q) subclass of heteromeric G proteins. Activation leads to mobilization of calcium, stimulation of phosphoinositide turnover and activation of p44/p42 mitogen-activated protein kinase. May play a role during early pregnancy. The chain is Prokineticin receptor 1 (PROKR1) from Bos taurus (Bovine).